Here is a 614-residue protein sequence, read N- to C-terminus: DNA mismatch repair protein MutL (614 aa).

The protein belongs to the DNA mismatch repair MutL/HexB family.

Its function is as follows. This protein is involved in the repair of mismatches in DNA. It is required for dam-dependent methyl-directed DNA mismatch repair. May act as a 'molecular matchmaker', a protein that promotes the formation of a stable complex between two or more DNA-binding proteins in an ATP-dependent manner without itself being part of a final effector complex. The sequence is that of DNA mismatch repair protein MutL from Thermoanaerobacter sp. (strain X514).